A 97-amino-acid polypeptide reads, in one-letter code: Large ribosomal subunit protein bL28 (97 aa).

It belongs to the bacterial ribosomal protein bL28 family.

The protein is Large ribosomal subunit protein bL28 of Rickettsia africae (strain ESF-5).